The primary structure comprises 258 residues: Chaperone protein caf1M (258 aa).

An N-terminal signal peptide occupies residues 1–20; sequence MILNRLSTLGIITFGMLSFA. Cys121 and Cys160 are joined by a disulfide.

The protein belongs to the periplasmic pilus chaperone family.

It localises to the periplasm. Has a stimulatory role for the envelope antigen F1 secretion. It seems to interact with the subunit polypeptide and to prevent it from digestion by a protease. This is Chaperone protein caf1M (caf1M) from Yersinia pestis.